The sequence spans 536 residues: CUGBP Elav-like family member 2 (536 aa).

3 RRM domains span residues 58–141 (IKMF…PADS), 150–230 (RKLF…FADT), and 451–529 (ANLF…LKRS).

It belongs to the CELF/BRUNOL family.

Its subcellular location is the nucleus. The protein resides in the cytoplasm. RNA-binding protein implicated in the regulation of several post-transcriptional events. May be involved in pre-mRNA alternative splicing, mRNA translation repression and stability. The polypeptide is CUGBP Elav-like family member 2 (celf2) (Xenopus laevis (African clawed frog)).